The sequence spans 257 residues: NAD-capped RNA hydrolase NudC (257 aa).

Arginine 69 is a binding site for substrate. Residues cysteine 98 and cysteine 101 each coordinate Zn(2+). Glutamate 111 provides a ligand contact to substrate. Zn(2+) contacts are provided by cysteine 116 and cysteine 119. Tyrosine 124 is a binding site for substrate. One can recognise a Nudix hydrolase domain in the interval 125-248 (PQIAPCIIVA…TVARRLIEDT (124 aa)). A divalent metal cation is bound by residues alanine 158, glutamate 174, and glutamate 178. A Nudix box motif is present at residues 159–180 (GFVEVGETLEQAVAREVMEESG). 192-199 (QPWPFPQS) contacts substrate. A divalent metal cation is bound at residue glutamate 219. Alanine 241 lines the substrate pocket.

It belongs to the Nudix hydrolase family. NudC subfamily. As to quaternary structure, homodimer. Requires Mg(2+) as cofactor. Mn(2+) serves as cofactor. Zn(2+) is required as a cofactor.

It carries out the reaction a 5'-end NAD(+)-phospho-ribonucleoside in mRNA + H2O = a 5'-end phospho-adenosine-phospho-ribonucleoside in mRNA + beta-nicotinamide D-ribonucleotide + 2 H(+). It catalyses the reaction NAD(+) + H2O = beta-nicotinamide D-ribonucleotide + AMP + 2 H(+). The enzyme catalyses NADH + H2O = reduced beta-nicotinamide D-ribonucleotide + AMP + 2 H(+). MRNA decapping enzyme that specifically removes the nicotinamide adenine dinucleotide (NAD) cap from a subset of mRNAs by hydrolyzing the diphosphate linkage to produce nicotinamide mononucleotide (NMN) and 5' monophosphate mRNA. The NAD-cap is present at the 5'-end of some mRNAs and stabilizes RNA against 5'-processing. Has preference for mRNAs with a 5'-end purine. Catalyzes the hydrolysis of a broad range of dinucleotide pyrophosphates. This chain is NAD-capped RNA hydrolase NudC, found in Klebsiella pneumoniae subsp. pneumoniae (strain ATCC 700721 / MGH 78578).